The following is a 254-amino-acid chain: Sugar fermentation stimulation protein homolog (254 aa).

The protein belongs to the SfsA family.

The polypeptide is Sugar fermentation stimulation protein homolog (Synechococcus sp. (strain CC9605)).